Here is a 415-residue protein sequence, read N- to C-terminus: Histidine--tRNA ligase (415 aa).

This sequence belongs to the class-II aminoacyl-tRNA synthetase family. Homodimer.

Its subcellular location is the cytoplasm. The enzyme catalyses tRNA(His) + L-histidine + ATP = L-histidyl-tRNA(His) + AMP + diphosphate + H(+). This chain is Histidine--tRNA ligase, found in Clostridium botulinum (strain Langeland / NCTC 10281 / Type F).